Reading from the N-terminus, the 490-residue chain is Prostaglandin E2 receptor EP4 subtype (490 aa).

Over 1–19 the chain is Extracellular; it reads MSTPGVNASASLSPDRLNS. Residue N7 is glycosylated (N-linked (GlcNAc...) asparagine). Residues 20 to 43 traverse the membrane as a helical segment; sequence PVTIPAVMFIFGVVGNLVAIVVLC. At 44 to 55 the chain is on the cytoplasmic side; it reads KSRKEQKETTFY. The helical transmembrane segment at 56–79 threads the bilayer; sequence TLVCGLAVTDLLGTLLVSPVTIAT. The Extracellular segment spans residues 80-96; the sequence is YMKGQWPGGQPLCEYST. C92 and C170 are oxidised to a cystine. Residues 97-115 form a helical membrane-spanning segment; that stretch reads FILLFFSLSGLSIICAMSV. Residues 116–135 are Cytoplasmic-facing; it reads ERYLAINHAYFYSHYVDKRL. The chain crosses the membrane as a helical span at residues 136-160; sequence AGLTLFAVYASNVLFCALPNMGLGS. Residues 161 to 184 lie on the Extracellular side of the membrane; the sequence is SRLQYPDTWCFIDWTTNVTAHAAY. A helical transmembrane segment spans residues 185–211; the sequence is SYMYAGFSSFLILATVLCNVLVCGALL. At 212 to 269 the chain is on the cytoplasmic side; that stretch reads RMHRQFMRRTSLGTEQHHAAAAAVTSVASRGHPAASPALPRLSDFRRRRSFRRIAGAE. The helical transmembrane segment at 270–297 threads the bilayer; it reads IQMVILLIATSLVVLICSIPLVVRVFVN. Topologically, residues 298-314 are extracellular; the sequence is QLYQPSLEREVSKNPDL. Residues 315 to 334 form a helical membrane-spanning segment; sequence QAIRIASVNPILDPWIYILL. Residues 335–490 are Cytoplasmic-facing; that stretch reads RKTVLSKAIE…ETLNLSEKCI (156 aa). Residues 359 to 378 form a disordered region; that stretch reads ERSGQHCSDSQRTSSAMSGH. Residues 363–378 are compositionally biased toward polar residues; it reads QHCSDSQRTSSAMSGH. 4 positions are modified to phosphoserine: S376, S379, S381, and S384. Polar residues predominate over residues 439–451; the sequence is SETSDSSQGQDSE. Residues 439–477 are disordered; sequence SETSDSSQGQDSESVLLVDEAGGSGRAGPAPKGSSLQVT.

This sequence belongs to the G-protein coupled receptor 1 family. Interacts with FEM1A. Phosphorylation mediates agonist-mediated desensitization by promoting cytoplasmic retention.

It is found in the cell membrane. Receptor for prostaglandin E2 (PGE2). The activity of this receptor is mediated by G(s) proteins that stimulate adenylate cyclase. Has a relaxing effect on smooth muscle. May play an important role in regulating renal hemodynamics, intestinal epithelial transport, adrenal aldosterone secretion, and uterine function. The sequence is that of Prostaglandin E2 receptor EP4 subtype (PTGER4) from Pan troglodytes (Chimpanzee).